The following is a 478-amino-acid chain: Growth/differentiation factor 10 (478 aa).

The first 33 residues, 1–33 (MAHVPARTSPGPGPQLLLLLLPLFLLLLRDVAG), serve as a signal peptide directing secretion. A propeptide spanning residues 34–368 (SHRAPAWSAL…EKTMQKARRK (335 aa)) is cleaved from the precursor. Residues N118, N156, and N281 are each glycosylated (N-linked (GlcNAc...) asparagine). The tract at residues 266 to 319 (YDPFPAGDPEPRAAPNNSADPRVRRAAQATGPLQDNELPGLDERPPRAHAQHFH) is disordered. 3 cysteine pairs are disulfide-bonded: C376/C443, C405/C475, and C409/C477. The N-linked (GlcNAc...) asparagine glycan is linked to N469.

This sequence belongs to the TGF-beta family. Homodimer or heterodimer. Can form a non-covalent complex of the mature region and the pro-region. As to expression, expressed in femur, brain, lung, skeletal muscle, pancreas and testis.

Its subcellular location is the secreted. In terms of biological role, growth factor involved in osteogenesis and adipogenesis. Plays an inhibitory role in the process of osteoblast differentiation via SMAD2/3 pathway. Plays an inhibitory role in the process of adipogenesis. This is Growth/differentiation factor 10 from Homo sapiens (Human).